The sequence spans 382 residues: Sphingoid long-chain base transporter RSB1 (382 aa).

At 1–34 (MSNATNNTLGSLLPQLEAAANSNSLYGGMVPNLR) the chain is on the extracellular side. N-linked (GlcNAc...) asparagine glycosylation is found at Asn-3 and Asn-6. A helical transmembrane segment spans residues 35–55 (FNITMIVIWGILLTIHVVQLL). Over 56-57 (MR) the chain is Cytoplasmic. A helical membrane pass occupies residues 58-78 (QYWFSIAFICTGILEVLGFIG). Over 79–90 (RTWSHSNVADMD) the chain is Extracellular. Residues 91 to 111 (AFLLNMICLTIAPVFTMGGIY) form a helical membrane-spanning segment. Topologically, residues 112–135 (YQLAKLIEVYGHRFSLLPSPMAYS) are cytoplasmic. A helical membrane pass occupies residues 136-156 (FIFICSDIVSLVVQAVGGGLC). At 157 to 171 (GVAVTDGTSTTTGNH) the chain is on the extracellular side. The chain crosses the membrane as a helical span at residues 172 to 192 (VFIAGLAIQVASMAIFLMLWF). Residues 193 to 241 (HFLFRIYISVRWEHINSRPISLSLLKISQTEVDYLYREKFHFLRLEPKR) are Cytoplasmic-facing. A helical transmembrane segment spans residues 242–262 (WVFHYFNLAMTVAVLTIFTRC). At 263-281 (CYRLAELVVGWDGYLITHE) the chain is on the extracellular side. A helical membrane pass occupies residues 282–302 (WYFIILDALMMAIATVTLTIF). Residues 303 to 382 (HPGFAFKGRS…LFSSKKKAKL (80 aa)) are Cytoplasmic-facing.

This sequence belongs to the lipid-translocating exporter (LTE) (TC 9.A.26.1) family.

The protein resides in the cell membrane. Its function is as follows. Catalyzes the ATP-dependent translocation of sphingoid long-chain bases (LCBs) from the cytoplasmic site toward the extracytoplasmic side of the membrane (flip-flop). Involved in the establishment of the functional lipid asymmetry of the plasma membrane. Regulates intracellular levels of LCBs, sphingolipid precursors that are growth inhibitory at increased levels. The chain is Sphingoid long-chain base transporter RSB1 (RSB1) from Saccharomyces cerevisiae (strain RM11-1a) (Baker's yeast).